The sequence spans 127 residues: Fatty acid binding protein 1-A, liver (127 aa).

This sequence belongs to the calycin superfamily. Fatty-acid binding protein (FABP) family. As to expression, in adults, weakly expressed in the intestine.

The protein localises to the cytoplasm. In terms of biological role, binds free fatty acids and their coenzyme A derivatives, bilirubin, and some other small molecules in the cytoplasm. May be involved in intracellular lipid transport. The chain is Fatty acid binding protein 1-A, liver from Danio rerio (Zebrafish).